Reading from the N-terminus, the 204-residue chain is General stress protein Ctc (204 aa).

The segment at 177 to 204 (ILPPQQQEAAEVDEEESADAQPEGENEQ) is disordered. The segment covering 186-204 (AEVDEEESADAQPEGENEQ) has biased composition (acidic residues).

The protein belongs to the bacterial ribosomal protein bL25 family. CTC subfamily. Part of the ribosome (presumably the 50S subunit) under heat-stress but not control growth conditions. Binds 5S rRNA.

Not required for exponential growth; probably functions in vegetatively growing cells, maybe required for accurate translation under stress conditions. This Bacillus subtilis (strain 168) protein is General stress protein Ctc.